The sequence spans 186 residues: MVCYGVTIILVGTLGSLLVGAFPQVTPKKSCSLSKYQFPAPLELKAVWRMKEQFEDIMLLTNRKCNTRLFHRKWDIAELSVPDRITLVEAELDLTITVLTNPTTQRLAETCQQPLAFLTQVQEDLRDCLALEAPSHQPSGKLRHWLQKLKTAKKKETAGCLEASAILHIFQVLNDLRCAAQREDCT.

A signal peptide spans M1 to A21. 3 disulfides stabilise this stretch: C31–C128, C65–C160, and C178–C185.

This sequence belongs to the lambda interferon family.

It is found in the secreted. Cytokine which plays a critical role in the antiviral host defense, predominantly in the epithelial tissues. Acts as a ligand for the heterodimeric class II cytokine receptor composed of IL10RB and IFNLR1, and receptor engagement leads to the activation of the JAK/STAT signaling pathway resulting in the expression of IFN-stimulated genes (ISG), which mediate the antiviral state. Has a restricted receptor distribution and therefore restricted targets: is primarily active in epithelial cells and this cell type-selective action is because of the epithelial cell-specific expression of its receptor IFNLR1. Exhibits antiviral activity against the H5N1 influenza A virus. Induces the expression of the antiviral MX protein in epithelial-rich tissues, such as intestine, trachea and lung. The chain is Interferon lambda-3 (IFNL3) from Gallus gallus (Chicken).